A 141-amino-acid polypeptide reads, in one-letter code: Pyrophosphate-energized proton pump (141 aa).

Transmembrane regions (helical) follow at residues 11–31, 46–66, and 121–141; these read GLIATGLLSIVGLGVANTLTV, GTNLFVCGLIGLIVTGLIVVI, and LAGLFGTAIAVTAMLGIAGMI.

It belongs to the H(+)-translocating pyrophosphatase (TC 3.A.10) family. In terms of assembly, homodimer. Requires Mg(2+) as cofactor.

It is found in the cell inner membrane. The catalysed reaction is diphosphate + H2O + H(+)(in) = 2 phosphate + 2 H(+)(out). Proton pump that utilizes the energy of pyrophosphate hydrolysis as the driving force for proton movement across the membrane. Generates a proton motive force. The polypeptide is Pyrophosphate-energized proton pump (hppA) (Anaplasma marginale).